We begin with the raw amino-acid sequence, 779 residues long: Ribosome-releasing factor 2, mitochondrial (779 aa).

In terms of domain architecture, tr-type G spans 68 to 353 (AKIRNIGIMA…AVTTYLPSPE (286 aa)). Residues 77–84 (AHIDAGKT), 141–145 (DTPGH), and 195–198 (NKMD) each bind GTP.

It belongs to the TRAFAC class translation factor GTPase superfamily. Classic translation factor GTPase family. EF-G/EF-2 subfamily.

It is found in the mitochondrion. It carries out the reaction GTP + H2O = GDP + phosphate + H(+). Mitochondrial GTPase that mediates the disassembly of ribosomes from messenger RNA at the termination of mitochondrial protein biosynthesis. Acts in collaboration with MRRF. GTP hydrolysis follows the ribosome disassembly and probably occurs on the ribosome large subunit. Not involved in the GTP-dependent ribosomal translocation step during translation elongation. The sequence is that of Ribosome-releasing factor 2, mitochondrial (Gfm2) from Rattus norvegicus (Rat).